We begin with the raw amino-acid sequence, 693 residues long: Elongation factor G (693 aa).

Residues 8 to 282 (EKTRNIGIMA…AVIDYLPSPL (275 aa)) enclose the tr-type G domain. GTP contacts are provided by residues 17-24 (AHVDAGKT), 81-85 (DTPGH), and 135-138 (NKMD).

Belongs to the TRAFAC class translation factor GTPase superfamily. Classic translation factor GTPase family. EF-G/EF-2 subfamily.

The protein localises to the cytoplasm. Its function is as follows. Catalyzes the GTP-dependent ribosomal translocation step during translation elongation. During this step, the ribosome changes from the pre-translocational (PRE) to the post-translocational (POST) state as the newly formed A-site-bound peptidyl-tRNA and P-site-bound deacylated tRNA move to the P and E sites, respectively. Catalyzes the coordinated movement of the two tRNA molecules, the mRNA and conformational changes in the ribosome. In Streptococcus suis (strain 05ZYH33), this protein is Elongation factor G.